The primary structure comprises 546 residues: Oncoprotein-induced transcript 3 protein (546 aa).

The N-terminal stretch at Met1 to Pro19 is a signal peptide. Residues Asn89 and Asn116 are each glycosylated (N-linked (GlcNAc...) asparagine). An EGF-like; calcium-binding domain is found at Asp182–Glu222. 3 disulfide bridges follow: Cys186/Cys197, Cys193/Cys206, and Cys208/Cys221. Residues Thr261–Arg516 form the ZP domain. N-linked (GlcNAc...) asparagine glycosylation occurs at Asn299.

In terms of tissue distribution, liver-specific. Expressed only in the hepatocytes.

It is found in the nucleus envelope. Its function is as follows. May be involved in hepatocellular function and development. The sequence is that of Oncoprotein-induced transcript 3 protein (Oit3) from Mus musculus (Mouse).